The chain runs to 499 residues: Probable cytosol aminopeptidase (499 aa).

Residues lysine 263 and aspartate 268 each contribute to the Mn(2+) site. Residue lysine 275 is part of the active site. Mn(2+) is bound by residues aspartate 286, aspartate 345, and glutamate 347. Arginine 349 is an active-site residue.

The protein belongs to the peptidase M17 family. Mn(2+) serves as cofactor.

The protein localises to the cytoplasm. The enzyme catalyses Release of an N-terminal amino acid, Xaa-|-Yaa-, in which Xaa is preferably Leu, but may be other amino acids including Pro although not Arg or Lys, and Yaa may be Pro. Amino acid amides and methyl esters are also readily hydrolyzed, but rates on arylamides are exceedingly low.. The catalysed reaction is Release of an N-terminal amino acid, preferentially leucine, but not glutamic or aspartic acids.. Presumably involved in the processing and regular turnover of intracellular proteins. Catalyzes the removal of unsubstituted N-terminal amino acids from various peptides. The protein is Probable cytosol aminopeptidase (pepA) of Chlamydia muridarum (strain MoPn / Nigg).